Consider the following 162-residue polypeptide: NADH-quinone oxidoreductase subunit I (162 aa).

4Fe-4S ferredoxin-type domains follow at residues 54–83 (RRYENGEERCIACKLCEVVCPALAITINST) and 93–122 (SSYEIDLFKCIFCGYCEESCPVDSIVETNI). The [4Fe-4S] cluster site is built by Cys63, Cys66, Cys69, Cys73, Cys102, Cys105, Cys108, and Cys112.

Belongs to the complex I 23 kDa subunit family. As to quaternary structure, NDH-1 is composed of 14 different subunits. Subunits NuoA, H, J, K, L, M, N constitute the membrane sector of the complex. [4Fe-4S] cluster is required as a cofactor.

The protein resides in the cell inner membrane. It carries out the reaction a quinone + NADH + 5 H(+)(in) = a quinol + NAD(+) + 4 H(+)(out). Its function is as follows. NDH-1 shuttles electrons from NADH, via FMN and iron-sulfur (Fe-S) centers, to quinones in the respiratory chain. The immediate electron acceptor for the enzyme in this species is believed to be ubiquinone. Couples the redox reaction to proton translocation (for every two electrons transferred, four hydrogen ions are translocated across the cytoplasmic membrane), and thus conserves the redox energy in a proton gradient. In Francisella tularensis subsp. holarctica (strain FTNF002-00 / FTA), this protein is NADH-quinone oxidoreductase subunit I.